The primary structure comprises 145 residues: 3-dehydroquinate dehydratase (145 aa).

The Proton acceptor role is filled by Tyr-23. Substrate-binding residues include Asn-74, His-80, and Asp-87. The active-site Proton donor is the His-100. Substrate-binding positions include 101 to 102 (IS) and Arg-111.

This sequence belongs to the type-II 3-dehydroquinase family. In terms of assembly, homododecamer.

The enzyme catalyses 3-dehydroquinate = 3-dehydroshikimate + H2O. It participates in metabolic intermediate biosynthesis; chorismate biosynthesis; chorismate from D-erythrose 4-phosphate and phosphoenolpyruvate: step 3/7. Catalyzes a trans-dehydration via an enolate intermediate. This chain is 3-dehydroquinate dehydratase, found in Mycobacterium leprae (strain Br4923).